The sequence spans 631 residues: MEEESKNGGTTIPTEELAVVAVPPVVEEEEPMVGPGPAPRGKRKRPLQFEQAYLDSLPSANMYEKSYMHRDVVTHVAVSAAEFFISGSMDGHLKFWKKKGVGIEFAKHFRSHLGPIEGLAVSIDGLLCCTISNDHAVKIYDVVNYDMMAMIRLPYIPGAVEWVYKQGDVKAKLAVSDRDSLFVHIYDPRSGSNEPIASKEIHMNPIKVMKYNPVSDTMISGDTKGIIEYWSATTLQFPEDEVNFKLKSDTNLFEIIKCKTTISAIEVSPDGKQFSITAPDRRIRVFWFRTGKLRRVYDESLVVAQDLQRSDAPLYRLEAIDFGRRMAVEKELEKTESAPQPNAVFDESSNFLIYATFLGIKVINLHTNTVARILGKVESNERYLRVALYQGDQGGKKVRKIPAAAANVNESKEPLTDPTILCCAFKKHRIYMFSRREPEEPEDASQGRDVFNEKPAADELMSVSDIGNSATTSLPENVIMHTTLGDIHMKLYPEECPKTVENFTTHCRNGYYDNHLFHRVIRGFMIQTGDPLGDGTGGQSIWGREFEDEFHKSLRHDRPFTLSMANAGPNTNGSQFFITTVATPWLDNKHTVFGRVVKGMDVVQGIEKVKTDKNDRPYQDVKILNVTVPKS.

The interval Val-26 to Arg-45 is disordered. WD repeat units follow at residues Met-68–Ala-106, Ser-111–Met-150, Ile-201–Asp-240, and Lys-257–Tyr-297. Positions Leu-474–Val-628 constitute a PPIase cyclophilin-type domain.

It belongs to the cyclophilin-type PPIase family. Interacts with FAS1 and LHP1. Interacts (via WD repeat domain) with histone H3. As to expression, ubiquitous. Expressed in the meristems.

Its subcellular location is the nucleus. The enzyme catalyses [protein]-peptidylproline (omega=180) = [protein]-peptidylproline (omega=0). In terms of biological role, PPIases accelerate the folding of proteins. It catalyzes the cis-trans isomerization of proline imidic peptide bonds in oligopeptides. Histone proline isomerase that increases the rate of cis-trans isomerization of the synthetic histone H3 peptides H3P30 (RKSAP30F-p-nitroanilide) and H3P30K27me3 (RKme3-SAP30F-p-nitroanilide) in the histone H3 N-terminal tail, in vitro. Histone remodeling factor involved in chromatin-based gene silencing. Reinforces H3K27 methylation. Involved in fundamental processes of chromatin assembly and histone modification by mediating the targeting of FAS1 and LHP1 on the chromatin. Required for the formation and development of leaves, for normal phyllotaxy and for the formation, maintenance and activity of root and shoot apical meristems. This chain is Peptidyl-prolyl cis-trans isomerase CYP71, found in Arabidopsis thaliana (Mouse-ear cress).